Consider the following 419-residue polypeptide: Tryptophan synthase beta chain (419 aa).

N6-(pyridoxal phosphate)lysine is present on lysine 113.

This sequence belongs to the TrpB family. In terms of assembly, tetramer of two alpha and two beta chains. Pyridoxal 5'-phosphate serves as cofactor.

The enzyme catalyses (1S,2R)-1-C-(indol-3-yl)glycerol 3-phosphate + L-serine = D-glyceraldehyde 3-phosphate + L-tryptophan + H2O. It participates in amino-acid biosynthesis; L-tryptophan biosynthesis; L-tryptophan from chorismate: step 5/5. The beta subunit is responsible for the synthesis of L-tryptophan from indole and L-serine. This is Tryptophan synthase beta chain from Picrophilus torridus (strain ATCC 700027 / DSM 9790 / JCM 10055 / NBRC 100828 / KAW 2/3).